A 164-amino-acid polypeptide reads, in one-letter code: Interleukin-31 (164 aa).

Positions 1–23 are cleaved as a signal peptide; that stretch reads MASHSGPSTSVLFLFCCLGGWLA. N-linked (GlcNAc...) asparagine glycosylation is found at Asn-67 and Asn-100.

Detected at low levels in testis, bone marrow, skeletal muscle, kidney, colon, thymus, small intestine and trachea.

The protein localises to the secreted. Functionally, activates STAT3 and possibly STAT1 and STAT5 through the IL31 heterodimeric receptor composed of IL31RA and OSMR. May function in skin immunity. Enhances myeloid progenitor cell survival in vitro. Induces RETNLA and serum amyloid A protein expression in macrophages. The sequence is that of Interleukin-31 (IL31) from Homo sapiens (Human).